The chain runs to 316 residues: Biotin synthase (316 aa).

A Radical SAM core domain is found at 38-266 (YKGKKIELCA…DKDIRVCGGR (229 aa)). 3 residues coordinate [4Fe-4S] cluster: Cys56, Cys60, and Cys63. Residues Ser100, Cys131, Cys191, and Arg261 each contribute to the [2Fe-2S] cluster site.

The protein belongs to the radical SAM superfamily. Biotin synthase family. As to quaternary structure, homodimer. Requires [4Fe-4S] cluster as cofactor. [2Fe-2S] cluster serves as cofactor.

The enzyme catalyses (4R,5S)-dethiobiotin + (sulfur carrier)-SH + 2 reduced [2Fe-2S]-[ferredoxin] + 2 S-adenosyl-L-methionine = (sulfur carrier)-H + biotin + 2 5'-deoxyadenosine + 2 L-methionine + 2 oxidized [2Fe-2S]-[ferredoxin]. It participates in cofactor biosynthesis; biotin biosynthesis; biotin from 7,8-diaminononanoate: step 2/2. In terms of biological role, catalyzes the conversion of dethiobiotin (DTB) to biotin by the insertion of a sulfur atom into dethiobiotin via a radical-based mechanism. The sequence is that of Biotin synthase from Thermodesulfovibrio yellowstonii (strain ATCC 51303 / DSM 11347 / YP87).